Here is a 503-residue protein sequence, read N- to C-terminus: Glycerol kinase (503 aa).

Residue Thr-17 coordinates ADP. ATP is bound by residues Thr-17, Thr-18, and Ser-19. Thr-17 contacts sn-glycerol 3-phosphate. Arg-21 is a binding site for ADP. 4 residues coordinate sn-glycerol 3-phosphate: Arg-87, Glu-88, Tyr-141, and Asp-245. 5 residues coordinate glycerol: Arg-87, Glu-88, Tyr-141, Asp-245, and Gln-246. ADP contacts are provided by Thr-267 and Gly-310. ATP contacts are provided by Thr-267, Gly-310, Gln-314, and Gly-411. Positions 411 and 415 each coordinate ADP.

It belongs to the FGGY kinase family.

It catalyses the reaction glycerol + ATP = sn-glycerol 3-phosphate + ADP + H(+). The protein operates within polyol metabolism; glycerol degradation via glycerol kinase pathway; sn-glycerol 3-phosphate from glycerol: step 1/1. Its activity is regulated as follows. Inhibited by fructose 1,6-bisphosphate (FBP). In terms of biological role, key enzyme in the regulation of glycerol uptake and metabolism. Catalyzes the phosphorylation of glycerol to yield sn-glycerol 3-phosphate. The protein is Glycerol kinase of Pseudomonas tolaasii.